A 354-amino-acid polypeptide reads, in one-letter code: S-adenosylmethionine:tRNA ribosyltransferase-isomerase (354 aa).

The protein belongs to the QueA family. Monomer.

It is found in the cytoplasm. The enzyme catalyses 7-aminomethyl-7-carbaguanosine(34) in tRNA + S-adenosyl-L-methionine = epoxyqueuosine(34) in tRNA + adenine + L-methionine + 2 H(+). The protein operates within tRNA modification; tRNA-queuosine biosynthesis. Functionally, transfers and isomerizes the ribose moiety from AdoMet to the 7-aminomethyl group of 7-deazaguanine (preQ1-tRNA) to give epoxyqueuosine (oQ-tRNA). In Pseudomonas savastanoi pv. phaseolicola (strain 1448A / Race 6) (Pseudomonas syringae pv. phaseolicola (strain 1448A / Race 6)), this protein is S-adenosylmethionine:tRNA ribosyltransferase-isomerase.